The primary structure comprises 546 residues: CTP synthase (546 aa).

The segment at Met1–Leu269 is amidoligase domain. Ser16 contributes to the CTP binding site. A UTP-binding site is contributed by Ser16. Residues Ser17 to Val22 and Asp74 each bind ATP. The Mg(2+) site is built by Asp74 and Glu143. CTP is bound by residues Asp150–Glu152, Lys190–Gln195, and Lys226. Residues Lys190–Gln195 and Lys226 contribute to the UTP site. Positions Ile294–Asn546 constitute a Glutamine amidotransferase type-1 domain. Residue Gly356 coordinates L-glutamine. The active-site Nucleophile; for glutamine hydrolysis is the Cys383. Residues Leu384 to Gln387, Glu407, and Arg474 contribute to the L-glutamine site. Catalysis depends on residues His519 and Glu521.

This sequence belongs to the CTP synthase family. In terms of assembly, homotetramer.

The catalysed reaction is UTP + L-glutamine + ATP + H2O = CTP + L-glutamate + ADP + phosphate + 2 H(+). It catalyses the reaction L-glutamine + H2O = L-glutamate + NH4(+). The enzyme catalyses UTP + NH4(+) + ATP = CTP + ADP + phosphate + 2 H(+). It functions in the pathway pyrimidine metabolism; CTP biosynthesis via de novo pathway; CTP from UDP: step 2/2. With respect to regulation, allosterically activated by GTP, when glutamine is the substrate; GTP has no effect on the reaction when ammonia is the substrate. The allosteric effector GTP functions by stabilizing the protein conformation that binds the tetrahedral intermediate(s) formed during glutamine hydrolysis. Inhibited by the product CTP, via allosteric rather than competitive inhibition. Catalyzes the ATP-dependent amination of UTP to CTP with either L-glutamine or ammonia as the source of nitrogen. Regulates intracellular CTP levels through interactions with the four ribonucleotide triphosphates. The chain is CTP synthase from Francisella tularensis subsp. holarctica (strain FTNF002-00 / FTA).